The sequence spans 407 residues: Argininosuccinate synthase (407 aa).

Residues 16–24 and alanine 44 each bind ATP; that span reads AYSGGLDTS. L-citrulline-binding residues include tyrosine 96 and serine 101. Glycine 126 contributes to the ATP binding site. Residues threonine 128, asparagine 132, and aspartate 133 each contribute to the L-aspartate site. Asparagine 132 is an L-citrulline binding site. Residues arginine 136, serine 185, serine 194, glutamate 270, and tyrosine 282 each contribute to the L-citrulline site.

It belongs to the argininosuccinate synthase family. Type 1 subfamily. As to quaternary structure, homotetramer.

It localises to the cytoplasm. The enzyme catalyses L-citrulline + L-aspartate + ATP = 2-(N(omega)-L-arginino)succinate + AMP + diphosphate + H(+). It participates in amino-acid biosynthesis; L-arginine biosynthesis; L-arginine from L-ornithine and carbamoyl phosphate: step 2/3. This Shewanella sp. (strain W3-18-1) protein is Argininosuccinate synthase.